Reading from the N-terminus, the 87-residue chain is uncharacterized protein (87 aa).

This sequence belongs to the SF3B5 family.

This is an uncharacterized protein from Arabidopsis thaliana (Mouse-ear cress).